The sequence spans 29 residues: Dermaseptin-J9 (29 aa).

Expressed by the skin glands.

It localises to the secreted. Its function is as follows. Has antimicrobial activity. This is Dermaseptin-J9 from Phasmahyla jandaia (Jandaia leaf frog).